We begin with the raw amino-acid sequence, 340 residues long: GATA transcription factor 20 (340 aa).

The interval 1 to 88 (MSHHDGSKPY…MEEDEDAQHH (88 aa)) is disordered. The span at 25 to 47 (ADDAAAHVAPTVDHLAAVAAEAE) shows a compositional bias: low complexity. Basic and acidic residues predominate over residues 48 to 60 (AMARFEEEHRALG). The span at 61 to 84 (AEEEYEEEEDELEEEEEEMEEDED) shows a compositional bias: acidic residues. Residues 121–156 (QPMASNQLTLSFQGEVYVFDSVSPDKVQAVLLLLGG) enclose the Tify domain. The 43-residue stretch at 182–224 (RVASLMRFREKRKERNFDKKIRYSVRKEVALRMQRNRGQFTSS) folds into the CCT domain. Residues 215-253 (QRNRGQFTSSKPKGDEATSELTASDGSPNWGSVEGRPPS) form a disordered region. The segment covering 233-244 (SELTASDGSPNW) has biased composition (polar residues). A GATA-type zinc finger spans residues 257-284 (CHHCGINAKATPMMRRGPDGPRTLCNAC). Residues 313-325 (DGNGSAAAPTTEQ) show a composition bias toward polar residues. The interval 313 to 340 (DGNGSAAAPTTEQEIPAPATVNGHESST) is disordered.

Belongs to the type IV zinc-finger family. Class C subfamily.

It localises to the nucleus. Functionally, transcriptional activator that specifically binds 5'-GATA-3' or 5'-GAT-3' motifs within gene promoters. The polypeptide is GATA transcription factor 20 (Oryza sativa subsp. japonica (Rice)).